The chain runs to 508 residues: Photosystem II CP47 reaction center protein (508 aa).

A run of 6 helical transmembrane segments spans residues 21 to 36 (AVHL…WAGS), 101 to 115 (IVLS…IWHW), 140 to 156 (GIHL…FGAF), 203 to 218 (IAAG…FHLS), 237 to 252 (VLSS…AFVV), and 457 to 472 (TFAL…HGAR).

It belongs to the PsbB/PsbC family. PsbB subfamily. In terms of assembly, PSII is composed of 1 copy each of membrane proteins PsbA, PsbB, PsbC, PsbD, PsbE, PsbF, PsbH, PsbI, PsbJ, PsbK, PsbL, PsbM, PsbT, PsbX, PsbY, PsbZ, Psb30/Ycf12, at least 3 peripheral proteins of the oxygen-evolving complex and a large number of cofactors. It forms dimeric complexes. The cofactor is Binds multiple chlorophylls. PSII binds additional chlorophylls, carotenoids and specific lipids..

The protein localises to the plastid. It is found in the chloroplast thylakoid membrane. One of the components of the core complex of photosystem II (PSII). It binds chlorophyll and helps catalyze the primary light-induced photochemical processes of PSII. PSII is a light-driven water:plastoquinone oxidoreductase, using light energy to abstract electrons from H(2)O, generating O(2) and a proton gradient subsequently used for ATP formation. The sequence is that of Photosystem II CP47 reaction center protein from Marchantia polymorpha (Common liverwort).